A 499-amino-acid polypeptide reads, in one-letter code: Tektin-like protein 1 (499 aa).

S14 carries the phosphoserine modification. Residues 201–225 (WEKKELKSMKRKMEKDMEISEDLLK) are a coiled coil. The disordered stretch occupies residues 265-286 (VDITRPPTPRTQGLKTPPPDPI). The stretch at 308 to 328 (KDILTEMAKNEVDIQNQQQEI) forms a coiled coil. Y372 is modified (phosphotyrosine).

Microtubule inner protein component of sperm flagellar doublet microtubules.

The protein resides in the cytoplasm. It localises to the cytoskeleton. It is found in the flagellum axoneme. Functionally, microtubule inner protein (MIP) part of the dynein-decorated doublet microtubules (DMTs) in sperm flagellar axoneme, which is required for motile flagellum beating. Forms an extensive interaction network cross-linking the lumen of axonemal doublet microtubules. The chain is Tektin-like protein 1 from Mus musculus (Mouse).